A 358-amino-acid chain; its full sequence is Putative myc-like protein MYCLP1 (358 aa).

2 disordered regions span residues 150–171 (ACSRSESPSDSEGEEIDVTVKK) and 219–245 (QEGAPKRMPPKEALEREAPGGKDDKED). Residues 227 to 242 (PPKEALEREAPGGKDD) show a composition bias toward basic and acidic residues. Residues 274–326 (WTKKKYHSYLERKRRNDQRSRFLALRDEVPALASCSRVSKVMILVKATEYLHE) enclose the bHLH domain.

As to quaternary structure, efficient DNA binding requires dimerization with another bHLH protein. Binds DNA as a heterodimer with MAX. In terms of tissue distribution, detected in adult testis.

It is found in the nucleus. This Homo sapiens (Human) protein is Putative myc-like protein MYCLP1 (MYCLP1).